A 1243-amino-acid chain; its full sequence is Membrane-associated phosphatidylinositol transfer protein 1 (1243 aa).

A phosphothreonine mark is found at Thr59, Thr282, and Thr287. Residues 259 to 330 (CNTGSEGPEA…HGGGVSPQSL (72 aa)) form a disordered region. A compositionally biased stretch (polar residues) spans 271–283 (PGKSSTEARPGTS). A compositionally biased stretch (low complexity) spans 299–319 (ASPDASFGKQWSSSSRSSYSS). A phosphoserine mark is found at Ser300, Ser304, Ser319, Ser326, Ser329, Ser342, Ser345, Ser346, and Ser373. Ser382 is modified (phosphoserine; by CDK1). Positions 581 to 593 (AGPGSRGSSRRGS) are enriched in low complexity. Residues 581-679 (AGPGSRGSSR…PASSEAPDGP (99 aa)) are disordered. Residues Ser593, Ser600, and Ser621 each carry the phosphoserine modification. Polar residues predominate over residues 643–658 (GSQNSLQVASTATSSG). A DDHD domain is found at 684 to 878 (RLDFKVSGFF…VVAFILRQVI (195 aa)). The residue at position 895 (Ser895) is a Phosphoserine. The segment at 1206-1243 (LLRSRGPSQVDREGPGTPPTTLARGKTRSISLKLDSEE) is disordered. Omega-N-methylarginine occurs at positions 1210 and 1217. Ser1236 carries the phosphoserine modification.

Belongs to the PtdIns transfer protein family. PI transfer class IIA subfamily. In terms of assembly, interacts with PTK2B via its C-terminus. Interacts with RHOA. Has higher affinity for the inactive, GDP-bound form of RHOA. The CDK1-phosphorylated form interacts with PLK1. Interacts with VAPB and PIK4CA. In terms of processing, phosphorylated on multiple sites by CDK1 at the onset of mitosis. Phosphorylation facilitates dissociation from the Golgi complex and is required for interaction with PLK1. Phosphorylated on threonine residues upon treatment with oleic acid. Post-translationally, phosphorylated on tyrosine residues by PTK2B. Detected at high levels in brain, and at lower levels in lung, kidney, spleen and liver (at protein level). Ubiquitous. Highly expressed in embryonic retina and the central nervous system.

The protein localises to the cytoplasm. It localises to the golgi apparatus. Its subcellular location is the golgi stack membrane. The protein resides in the endoplasmic reticulum membrane. It is found in the lipid droplet. The protein localises to the cleavage furrow. It localises to the midbody. It carries out the reaction a 1,2-diacyl-sn-glycero-3-phospho-(1D-myo-inositol)(in) = a 1,2-diacyl-sn-glycero-3-phospho-(1D-myo-inositol)(out). Its function is as follows. Catalyzes the transfer of phosphatidylinositol (PI) between membranes. Binds PI. Also binds phosphatidylcholine (PC) and phosphatidic acid (PA) with the binding affinity order of PI &gt; PA &gt; PC. Regulates RHOA activity, and plays a role in cytoskeleton remodeling. Necessary for normal completion of cytokinesis. Plays a role in maintaining normal diacylglycerol levels in the Golgi apparatus. Necessary for maintaining the normal structure of the endoplasmic reticulum and the Golgi apparatus. Required for protein export from the endoplasmic reticulum and the Golgi. Binds calcium ions. The chain is Membrane-associated phosphatidylinositol transfer protein 1 (Pitpnm1) from Mus musculus (Mouse).